The primary structure comprises 2703 residues: Serine/arginine repetitive matrix protein 2 (2703 aa).

M1 bears the N-acetylmethionine mark. Residues 60 to 92 (HERKRRVELRCLELEEMMEEQGYEEQQIQEKVA) are a coiled coil. K101 carries the N6-acetyllysine modification. Glycyl lysine isopeptide (Lys-Gly) (interchain with G-Cter in SUMO2) cross-links involve residues K108 and K130. Positions 141 to 1007 (ISDSYVDGSS…SGSFHLCPGV (867 aa)) are disordered. Residue Y145 is modified to Phosphotyrosine. At K169 the chain carries N6-acetyllysine. Composition is skewed to basic residues over residues 186-197 (KQKKKKKKKDRG) and 207-249 (RERK…KRSR). Residues 197–259 (GRRSESSSPR…STTPAPKSRR (63 aa)) form a sufficient for RNA-binding region. Phosphoserine occurs at positions 220 and 222. Residues 263–284 (STSADSASSSDTSRSRSRSAAA) show a composition bias toward low complexity. 5 positions are modified to phosphoserine: S295, S300, S310, S322, and S323. The segment covering 319 to 334 (QQPSSPAPSTKQSSSP) has biased composition (low complexity). The segment covering 335 to 345 (YEDKDKKEKSA) has biased composition (basic and acidic residues). 4 positions are modified to phosphoserine: S349, S351, S355, and S356. A phosphothreonine mark is found at T357 and T365. S375, S385, S393, S396, S402, S406, S422, S433, S434, S435, S438, S452, S482, S484, S503, S505, S507, S531, S533, and S540 each carry phosphoserine. Positions 383 to 396 (PSSQEPVNPSSEAS) are enriched in polar residues. The segment covering 425–437 (PTKGSRHASSSPE) has biased composition (polar residues). Residues 459 to 533 (NRSHGRAKRD…SPQRRGRSRS (75 aa)) are compositionally biased toward basic residues. The span at 534–543 (PQRPGWSRSR) shows a compositional bias: low complexity. Basic residues-rich tracts occupy residues 544–561 (NTQR…RSHS), 568–721 (GRSR…RRGR), and 730–740 (NKSRTSQRRSR). S700, S702, and S704 each carry phosphoserine. Phosphoserine occurs at positions 773, 775, and 778. Low complexity predominate over residues 785 to 817 (SQTPTRRSRSGSSPPKQKSKTPPRQSRSNSPQP). S821 and S829 each carry phosphoserine. 2 stretches are compositionally biased toward polar residues: residues 829 to 851 (SVTN…SESS) and 859 to 874 (RTPS…PRVK). Phosphothreonine is present on residues T831 and T841. Phosphoserine is present on residues S846, S850, and S851. Low complexity-rich tracts occupy residues 875–891 (SSTP…SPQP) and 898–919 (SPRG…TSRT). Residues S882, S909, S924, S926, S928, S940, S942, S944, S945, S946, and S949 each carry the phosphoserine modification. T955 is modified (phosphothreonine). Residues 960-1000 (SGSTSPYLKSMLQTPPDQNLSGSKSPCPQKSRDSPTGSSGS) show a composition bias toward polar residues. Phosphoserine occurs at positions 962 and 964. Y966 carries the post-translational modification Phosphotyrosine. A Phosphothreonine modification is found at T973. A phosphoserine mark is found at S980, S984, and S993. T995 carries the phosphothreonine modification. Phosphoserine is present on residues S997, S1000, S1011, S1037, and S1038. Residues 1024 to 1057 (VQQKGHTQTWPDTSSPEVMQTQVESPLLQSKSQT) show a composition bias toward polar residues. The tract at residues 1024–1112 (VQQKGHTQTW…TKPDSSIYPL (89 aa)) is disordered. Position 1044 is a phosphothreonine (T1044). 5 positions are modified to phosphoserine: S1048, S1064, S1066, S1067, and S1068. Residues 1058 to 1068 (SPKGSLSRSSS) are compositionally biased toward low complexity. Phosphothreonine is present on T1071. Residues S1077, S1087, S1094, S1097, S1117, S1151, S1159, S1175, S1188, S1216, S1225, S1229, S1230, S1269, S1276, S1278, S1284, S1287, S1294, S1305, S1325, S1338, S1339, S1340, S1343, S1359, and S1360 each carry the phosphoserine modification. Residues 1079–1092 (VKQDKSEISTDPKL) are compositionally biased toward basic and acidic residues. The segment at 1136-2092 (IQEDVASSCI…RSPGMLEPLG (957 aa)) is disordered. Over residues 1146–1158 (PRDKFSPTQDRPE) the composition is skewed to basic and acidic residues. Residues 1270-1284 (PEHKELSHSPPRENS) are compositionally biased toward basic and acidic residues. A compositionally biased stretch (polar residues) spans 1285–1304 (FESSLEFKNSGPVSEVNTGF). T1370 is modified (phosphothreonine). A compositionally biased stretch (basic and acidic residues) spans 1371-1387 (PSRERSSSASPELKDGL). S1372, S1378, and S1380 each carry phosphoserine. T1390 is modified (phosphothreonine). The span at 1397-1408 (SGSSPGLRDGSG) shows a compositional bias: low complexity. 2 positions are modified to phosphoserine: S1400 and S1407. T1409 carries the phosphothreonine modification. The segment covering 1409 to 1431 (TPSRHSLSGSSPGMKDTPQTPSR) has biased composition (polar residues). 4 positions are modified to phosphoserine: S1414, S1416, S1418, and S1419. A Phosphothreonine modification is found at T1428. Residues S1438 and S1439 each carry the phosphoserine modification. Residue T1448 is modified to Phosphothreonine. Phosphoserine is present on residues S1453, S1455, S1457, S1458, and S1465. Residues 1454–1468 (HSPSSPERNNKSVTP) are compositionally biased toward polar residues. The residue at position 1467 (T1467) is a Phosphothreonine. 4 positions are modified to phosphoserine: S1473, S1475, S1477, and S1478. Residues 1475-1489 (SESSVEQKNLARTSP) show a composition bias toward polar residues. Phosphothreonine is present on T1487. Over residues 1490-1499 (GQRSRSGSSQ) the composition is skewed to low complexity. A phosphoserine mark is found at S1493, S1495, S1497, S1498, and S1508. A compositionally biased stretch (basic and acidic residues) spans 1511-1523 (ERSESDSSPDSKP). Residues 1524–1533 (KTRTPLRQRS) are compositionally biased toward basic residues. Residues S1533, S1535, S1537, S1538, S1554, S1556, S1557, S1572, S1576, S1577, S1604, S1614, S1647, S1649, and S1650 each carry the phosphoserine modification. Low complexity predominate over residues 1604–1613 (SPEGSSSSES). The segment covering 1637-1647 (KSHTPPRRRSS) has biased composition (basic residues). T1654 carries the phosphothreonine modification. S1683, S1685, S1687, S1688, S1718, and S1720 each carry phosphoserine. Basic residues-rich tracts occupy residues 1725–1745 (GLQR…RRRD) and 1754–1772 (SRRR…RRRG). Phosphoserine occurs at positions 1774, 1778, 1810, 1813, 1832, and 1834. Low complexity predominate over residues 1776–1789 (YHSRSPTRQESSRT). Basic residues predominate over residues 1790-1810 (SSRRRRGRSRTPLTSRKRSRS). Over residues 1818–2020 (KRSRSRASPA…PRAARGKRSL (203 aa)) the composition is skewed to basic residues. A Phosphothreonine modification is found at T1836. S1840 and S1846 each carry phosphoserine. T1848 bears the Phosphothreonine mark. Residues S1849, S1869, S1872, S1876, and S1878 each carry the phosphoserine modification. 2 positions are modified to phosphothreonine: T1880 and T1884. 2 positions are modified to phosphoserine: S1898 and S1900. T1902 and T1906 each carry phosphothreonine. Phosphoserine is present on residues S1910 and S1912. A phosphothreonine mark is found at T1914 and T1918. Phosphoserine is present on residues S1922, S1924, and S1927. Residue T1930 is modified to Phosphothreonine. S1936, S1939, S1948, S1951, S1960, S1963, S1970, and S1972 each carry phosphoserine. A Phosphothreonine modification is found at T1974. Phosphoserine is present on residues S1982 and S1984. At T1986 the chain carries Phosphothreonine. 4 positions are modified to phosphoserine: S1994, S1996, S1998, and S2019. The residue at position 2021 (T2021) is a Phosphothreonine. Residues 2022–2047 (RSPPAIRRRSASGSSSDRSRSATPPA) show a composition bias toward low complexity. A phosphoserine mark is found at S2023 and S2042. T2044 is subject to Phosphothreonine. Phosphoserine occurs at positions 2052 and 2054. T2056 is modified (phosphothreonine). Low complexity predominate over residues 2062–2076 (SSSRMSCFSRPSMSP). A phosphoserine mark is found at S2070, S2073, S2075, and S2084. T2096 carries the phosphothreonine modification. Omega-N-methylarginine is present on residues R2146, R2159, R2183, and R2198. A Phosphoserine modification is found at S2224. Omega-N-methylarginine occurs at positions 2226 and 2240. A phosphothreonine mark is found at T2241 and T2254. Residue S2262 is modified to Phosphoserine. Positions 2263 to 2703 (LTGSGTPPTA…SNRHRSSRSP (441 aa)) are disordered. Phosphothreonine is present on residues T2268 and T2281. The segment covering 2269 to 2283 (PPTAANYPSSSRTPQ) has biased composition (polar residues). An Omega-N-methylarginine modification is found at R2295. A phosphoserine mark is found at S2296, S2321, and S2329. T2334 carries the post-translational modification Phosphothreonine. Phosphoserine is present on S2335. Position 2337 is an asymmetric dimethylarginine; alternate (R2337). Position 2337 is an omega-N-methylarginine; alternate (R2337). Phosphoserine occurs at positions 2347, 2351, and 2360. T2362 carries the post-translational modification Phosphothreonine. Phosphoserine is present on residues S2365, S2368, S2381, S2384, S2404, and S2408. 2 stretches are compositionally biased toward polar residues: residues 2410-2443 (FSDQ…SASD) and 2467-2476 (TGAQQPSTLA). Low complexity predominate over residues 2487 to 2521 (SSSSSSSSSSSSSSSSSSSSSSSSGSSSSDSEGSS). S2535 carries the post-translational modification Phosphoserine. Position 2537 is a phosphothreonine (T2537). Residue K2541 forms a Glycyl lysine isopeptide (Lys-Gly) (interchain with G-Cter in SUMO2) linkage. A Phosphothreonine modification is found at T2553. The segment covering 2562-2602 (SSSSSSSSSSSSSSSSSSSSSSSSSSSSSSSSSSSSSSSSS) has biased composition (low complexity). Over residues 2605–2622 (PAKPGPQALPKPASPKKP) the composition is skewed to pro residues. 10 positions are modified to phosphoserine: S2618, S2629, S2631, S2638, S2642, S2644, S2646, S2648, S2656, and S2660. Residues 2623–2643 (PPGERRSRSPRKPIDSLRDSR) show a composition bias toward basic and acidic residues. A Phosphothreonine modification is found at T2689. A Phosphoserine modification is found at S2691. Basic residues predominate over residues 2694–2703 (SNRHRSSRSP).

Belongs to the CWC21 family. In terms of assembly, component of pre-catalytic, catalytic and post-catalytic spliceosome complexes. Found in a pre-mRNA splicing complex with SFRS4, SFRS5, SNRP70, SNRPA1, SRRM1 and SRRM2. Component of the minor spliceosome, which splices U12-type introns. Interacts with DHX8. Interacts with CACTIN.

The protein resides in the nucleus. It is found in the nucleus speckle. Its function is as follows. Required for pre-mRNA splicing as component of the spliceosome. As a component of the minor spliceosome, involved in the splicing of U12-type introns in pre-mRNAs. In Mus musculus (Mouse), this protein is Serine/arginine repetitive matrix protein 2 (Srrm2).